The following is a 284-amino-acid chain: uncharacterized protein (284 aa).

One can recognise an AB hydrolase-1 domain in the interval 25–123 (PILVMHGGHS…NTLTLQSAVT (99 aa)). The active site involves Ser96.

It belongs to the AB hydrolase superfamily.

This is an uncharacterized protein from Bacillus subtilis (strain 168).